The chain runs to 189 residues: dTTP/UTP pyrophosphatase (189 aa).

The active-site Proton acceptor is Asp73.

Belongs to the Maf family. YhdE subfamily. Requires a divalent metal cation as cofactor.

Its subcellular location is the cytoplasm. It carries out the reaction dTTP + H2O = dTMP + diphosphate + H(+). It catalyses the reaction UTP + H2O = UMP + diphosphate + H(+). Functionally, nucleoside triphosphate pyrophosphatase that hydrolyzes dTTP and UTP. May have a dual role in cell division arrest and in preventing the incorporation of modified nucleotides into cellular nucleic acids. In Vibrio parahaemolyticus serotype O3:K6 (strain RIMD 2210633), this protein is dTTP/UTP pyrophosphatase.